A 361-amino-acid chain; its full sequence is D-alanine--D-alanine ligase (361 aa).

The ATP-grasp domain occupies 144-350 (KLAAADAGLA…FMELTDRLIR (207 aa)). 177-232 (VASLSFPMFVKPVSLGSSVGITKVNSESELAEAITHACSLDSKVLIEQAVKGREVE) provides a ligand contact to ATP. Asp-303, Glu-317, and Asn-319 together coordinate Mg(2+).

Belongs to the D-alanine--D-alanine ligase family. Mg(2+) serves as cofactor. Requires Mn(2+) as cofactor.

The protein localises to the cytoplasm. The enzyme catalyses 2 D-alanine + ATP = D-alanyl-D-alanine + ADP + phosphate + H(+). Its pathway is cell wall biogenesis; peptidoglycan biosynthesis. Cell wall formation. In Chlorobium luteolum (strain DSM 273 / BCRC 81028 / 2530) (Pelodictyon luteolum), this protein is D-alanine--D-alanine ligase.